Reading from the N-terminus, the 495-residue chain is Omega-crystallin (495 aa).

The protein belongs to the aldehyde dehydrogenase family. As to expression, lens.

In terms of biological role, omega-crystallins are structural components of squids and octopi eye lens. Contains relatively little if any DHAL activity. In Nototodarus sloanii (Wellington flying squid), this protein is Omega-crystallin.